The primary structure comprises 391 residues: Formate-dependent phosphoribosylglycinamide formyltransferase (391 aa).

N(1)-(5-phospho-beta-D-ribosyl)glycinamide contacts are provided by residues 18–19 and Glu78; that span reads EL. ATP contacts are provided by residues Arg110, Lys151, 156–161, 191–194, and Glu199; these read SSGKGQ and EEFI. An ATP-grasp domain is found at 115-305; it reads DLAAQQLGLR…EFELHLRAVL (191 aa). Mg(2+)-binding residues include Glu264 and Glu276. Residues Asp283, Lys353, and 360 to 361 each bind N(1)-(5-phospho-beta-D-ribosyl)glycinamide; that span reads RR.

Belongs to the PurK/PurT family. Homodimer.

It catalyses the reaction N(1)-(5-phospho-beta-D-ribosyl)glycinamide + formate + ATP = N(2)-formyl-N(1)-(5-phospho-beta-D-ribosyl)glycinamide + ADP + phosphate + H(+). The protein operates within purine metabolism; IMP biosynthesis via de novo pathway; N(2)-formyl-N(1)-(5-phospho-D-ribosyl)glycinamide from N(1)-(5-phospho-D-ribosyl)glycinamide (formate route): step 1/1. In terms of biological role, involved in the de novo purine biosynthesis. Catalyzes the transfer of formate to 5-phospho-ribosyl-glycinamide (GAR), producing 5-phospho-ribosyl-N-formylglycinamide (FGAR). Formate is provided by PurU via hydrolysis of 10-formyl-tetrahydrofolate. The sequence is that of Formate-dependent phosphoribosylglycinamide formyltransferase from Synechococcus elongatus (strain ATCC 33912 / PCC 7942 / FACHB-805) (Anacystis nidulans R2).